Here is a 685-residue protein sequence, read N- to C-terminus: N(6)-adenosine-methyltransferase MT-A70-like (685 aa).

S-adenosyl-L-methionine contacts are provided by residues 464 to 465 and Asp482; that span reads DI. Residues 552 to 565 form a positively charged region required for RNA-binding region; that stretch reads RIIRTGRTGHWLNH. S-adenosyl-L-methionine contacts are provided by residues Lys599, 622–625, and 635–636; these read RMHN and NQ. The disordered stretch occupies residues 657–685; it reads EIDVQPPSPPRASAMETDNEPMAIDSITA. At Ser664 the chain carries Phosphoserine.

This sequence belongs to the MT-A70-like family. As to quaternary structure, interacts with FIP37. Interacts with MTB. Associates with MTB, FIP37, VIR and HAKAI to form the m6A writer complex which is essential for adenosine methylation at specific mRNA sequences.

It localises to the nucleus. It carries out the reaction an adenosine in mRNA + S-adenosyl-L-methionine = an N(6)-methyladenosine in mRNA + S-adenosyl-L-homocysteine + H(+). In terms of biological role, catalytic subunit of the N6-methyltransferase complex, a multiprotein complex that mediates N6-methyladenosine (m6A) methylation at the 5'-[AG]GAC-3' consensus sites of some mRNAs. Associates with MTB, FIP37, VIR and HAKAI to form the m6A writer complex which is essential for adenosine methylation at specific mRNA sequences. N6-methyladenosine (m6A) plays a role in mRNA stability, processing, translation efficiency and editing. This chain is N(6)-adenosine-methyltransferase MT-A70-like, found in Arabidopsis thaliana (Mouse-ear cress).